We begin with the raw amino-acid sequence, 670 residues long: Oligopeptidase PepF (670 aa).

Zn(2+) is bound at residue histidine 456. Glutamate 457 is an active-site residue. The Zn(2+) site is built by histidine 460 and histidine 463.

This sequence belongs to the peptidase M3B family. The cofactor is Zn(2+).

The protein resides in the cytoplasm. Overexpression results in inhibition of sporulation initiation. This sporulation deficiency could be the result of hydrolysis by PepF of the PhrA peptide, a phosphatase regulator. Thus, overexpression of PepF appears to act at the level of the phosphorelay, most likely through modulation of the negative role played by phosphatases. Overexpression of PepF also affects the activity of the competence and sporulation stimulating factor PhrC. This chain is Oligopeptidase PepF, found in Bacillus subtilis (strain 168).